A 175-amino-acid chain; its full sequence is Large ribosomal subunit protein bL9 (175 aa).

The protein belongs to the bacterial ribosomal protein bL9 family.

In terms of biological role, binds to the 23S rRNA. This Orientia tsutsugamushi (strain Boryong) (Rickettsia tsutsugamushi) protein is Large ribosomal subunit protein bL9.